A 248-amino-acid polypeptide reads, in one-letter code: Probable transcriptional regulatory protein BH14810 (248 aa).

This sequence belongs to the TACO1 family.

Its subcellular location is the cytoplasm. In Bartonella henselae (strain ATCC 49882 / DSM 28221 / CCUG 30454 / Houston 1) (Rochalimaea henselae), this protein is Probable transcriptional regulatory protein BH14810.